The sequence spans 183 residues: Ferredoxin-2, mitochondrial (183 aa).

The transit peptide at 1-52 (MAASMARGGVSARVLLQAARGTWWNRPGGTSGSGEGVALGTTRKFQATGSRP) directs the protein to the mitochondrion. Residues 45 to 65 (FQATGSRPAGEEDAGGPERPG) form a disordered region. The 2Fe-2S ferredoxin-type domain maps to 68-170 (VNVVFVDRSG…GAEFTLPKIT (103 aa)). Cysteine 105, cysteine 111, cysteine 114, and cysteine 151 together coordinate [2Fe-2S] cluster.

Belongs to the adrenodoxin/putidaredoxin family. In terms of assembly, component of the mitochondrial core iron-sulfur cluster (ISC) complex composed of NFS1, LYRM4, NDUFAB1, ISCU, FXN, and FDX2; this complex is a heterohexamer containing two copies of each monomer. Form a heterodimer complex with NFS1. Interacts (in both their reduced and oxidized states) with the cysteine desulfurase complex; this interaction stimulates cysteine desulfurase activity, and serves as a reductant for Fe-S cluster assembly. [2Fe-2S] cluster serves as cofactor. As to expression, widely expressed, with highest levels in testis, kidney and brain (at protein level). Expressed in muscle (at protein level). Expressed in fibroblasts (at protein level).

It localises to the mitochondrion. It is found in the mitochondrion matrix. Its function is as follows. Electron donor, of the core iron-sulfur cluster (ISC) assembly complex, that acts to reduce the persulfide into sulfide during [2Fe-2S] clusters assembly on the scaffolding protein ISCU. The core iron-sulfur cluster (ISC) assembly complex is involved in the de novo synthesis of a [2Fe-2S] cluster, the first step of the mitochondrial iron-sulfur protein biogenesis. This process is initiated by the cysteine desulfurase complex (NFS1:LYRM4:NDUFAB1) that produces persulfide which is delivered on the scaffold protein ISCU in a FXN-dependent manner. Then this complex is stabilized by FDX2 which provides reducing equivalents to accomplish the [2Fe-2S] cluster assembly. Finally, the [2Fe-2S] cluster is transferred from ISCU to chaperone proteins, including HSCB, HSPA9 and GLRX5. Essential for coenzyme Q biosynthesis: together with FDXR, transfers the electrons required for the hydroxylation reaction performed by COQ6. This Homo sapiens (Human) protein is Ferredoxin-2, mitochondrial.